The following is a 130-amino-acid chain: Glycine cleavage system H protein (130 aa).

A Lipoyl-binding domain is found at 22–103 (QAWIGISDYA…PYANYIVVVA (82 aa)). Lysine 63 is subject to N6-lipoyllysine.

This sequence belongs to the GcvH family. The glycine cleavage system is composed of four proteins: P, T, L and H. It depends on (R)-lipoate as a cofactor.

Its function is as follows. The glycine cleavage system catalyzes the degradation of glycine. The H protein shuttles the methylamine group of glycine from the P protein to the T protein. The polypeptide is Glycine cleavage system H protein (Syntrophomonas wolfei subsp. wolfei (strain DSM 2245B / Goettingen)).